Consider the following 181-residue polypeptide: MPLIIGIDPGSRLTGYGIIEKDGSKLRFVDAGTIRTETQEMPERLKRIFAGVERIVKFHGPTEAAVEQVFMAQNPDSALKLGQARGAAIAALVNLDLQVAEYTARQIKQSVVGYGAADKEQVQMMVMRLLNLTIKPQADAADALAAAICHAHASGSMSKLTVLNALGGMARGRSRSSSRRR.

Active-site residues include aspartate 8, glutamate 67, and aspartate 139. Mg(2+) contacts are provided by aspartate 8, glutamate 67, and aspartate 139.

The protein belongs to the RuvC family. As to quaternary structure, homodimer which binds Holliday junction (HJ) DNA. The HJ becomes 2-fold symmetrical on binding to RuvC with unstacked arms; it has a different conformation from HJ DNA in complex with RuvA. In the full resolvosome a probable DNA-RuvA(4)-RuvB(12)-RuvC(2) complex forms which resolves the HJ. Mg(2+) serves as cofactor.

It localises to the cytoplasm. The enzyme catalyses Endonucleolytic cleavage at a junction such as a reciprocal single-stranded crossover between two homologous DNA duplexes (Holliday junction).. The RuvA-RuvB-RuvC complex processes Holliday junction (HJ) DNA during genetic recombination and DNA repair. Endonuclease that resolves HJ intermediates. Cleaves cruciform DNA by making single-stranded nicks across the HJ at symmetrical positions within the homologous arms, yielding a 5'-phosphate and a 3'-hydroxyl group; requires a central core of homology in the junction. The consensus cleavage sequence is 5'-(A/T)TT(C/G)-3'. Cleavage occurs on the 3'-side of the TT dinucleotide at the point of strand exchange. HJ branch migration catalyzed by RuvA-RuvB allows RuvC to scan DNA until it finds its consensus sequence, where it cleaves and resolves the cruciform DNA. This is Crossover junction endodeoxyribonuclease RuvC from Acinetobacter baumannii (strain SDF).